Here is a 356-residue protein sequence, read N- to C-terminus: Phosphoribosylformylglycinamidine cyclo-ligase (356 aa).

Belongs to the AIR synthase family.

It is found in the cytoplasm. It catalyses the reaction 2-formamido-N(1)-(5-O-phospho-beta-D-ribosyl)acetamidine + ATP = 5-amino-1-(5-phospho-beta-D-ribosyl)imidazole + ADP + phosphate + H(+). It participates in purine metabolism; IMP biosynthesis via de novo pathway; 5-amino-1-(5-phospho-D-ribosyl)imidazole from N(2)-formyl-N(1)-(5-phospho-D-ribosyl)glycinamide: step 2/2. The chain is Phosphoribosylformylglycinamidine cyclo-ligase from Acinetobacter baylyi (strain ATCC 33305 / BD413 / ADP1).